Reading from the N-terminus, the 264-residue chain is Thymidylate synthase (264 aa).

DUMP is bound at residue R21. H51 lines the (6R)-5,10-methylene-5,6,7,8-tetrahydrofolate pocket. A dUMP-binding site is contributed by 126 to 127 (RR). Catalysis depends on C146, which acts as the Nucleophile. DUMP is bound by residues 166–169 (RSCD), N177, and 207–209 (HLY). D169 contributes to the (6R)-5,10-methylene-5,6,7,8-tetrahydrofolate binding site. Residue S263 coordinates (6R)-5,10-methylene-5,6,7,8-tetrahydrofolate.

This sequence belongs to the thymidylate synthase family. Bacterial-type ThyA subfamily. Homodimer.

The protein localises to the cytoplasm. The enzyme catalyses dUMP + (6R)-5,10-methylene-5,6,7,8-tetrahydrofolate = 7,8-dihydrofolate + dTMP. It functions in the pathway pyrimidine metabolism; dTTP biosynthesis. Functionally, catalyzes the reductive methylation of 2'-deoxyuridine-5'-monophosphate (dUMP) to 2'-deoxythymidine-5'-monophosphate (dTMP) while utilizing 5,10-methylenetetrahydrofolate (mTHF) as the methyl donor and reductant in the reaction, yielding dihydrofolate (DHF) as a by-product. This enzymatic reaction provides an intracellular de novo source of dTMP, an essential precursor for DNA biosynthesis. In Buchnera aphidicola subsp. Acyrthosiphon pisum (strain Tuc7), this protein is Thymidylate synthase.